The sequence spans 527 residues: Glutamate--cysteine ligase (527 aa).

Belongs to the glutamate--cysteine ligase type 1 family. Type 1 subfamily.

It carries out the reaction L-cysteine + L-glutamate + ATP = gamma-L-glutamyl-L-cysteine + ADP + phosphate + H(+). It functions in the pathway sulfur metabolism; glutathione biosynthesis; glutathione from L-cysteine and L-glutamate: step 1/2. This Bordetella petrii (strain ATCC BAA-461 / DSM 12804 / CCUG 43448) protein is Glutamate--cysteine ligase.